The following is a 177-amino-acid chain: Large ribosomal subunit protein uL6 (177 aa).

It belongs to the universal ribosomal protein uL6 family. As to quaternary structure, part of the 50S ribosomal subunit.

Its function is as follows. This protein binds to the 23S rRNA, and is important in its secondary structure. It is located near the subunit interface in the base of the L7/L12 stalk, and near the tRNA binding site of the peptidyltransferase center. The sequence is that of Large ribosomal subunit protein uL6 from Albidiferax ferrireducens (strain ATCC BAA-621 / DSM 15236 / T118) (Rhodoferax ferrireducens).